We begin with the raw amino-acid sequence, 32 residues long: Natriuretic peptide Coa_NP1 (32 aa).

C8 and C24 are disulfide-bonded.

It belongs to the natriuretic peptide family. Snake NP subfamily. Expressed by the venom gland.

The protein resides in the secreted. In terms of biological role, snake venom natriuretic peptide that exhibits hypotensive and vasodepressor activity in rats. In Crotalus lutosus abyssus (Grand Canyon rattlesnake), this protein is Natriuretic peptide Coa_NP1.